Consider the following 343-residue polypeptide: Ferredoxin--NADP reductase (343 aa).

FAD-binding residues include aspartate 31, lysine 39, tyrosine 43, valine 83, isoleucine 118, aspartate 285, and serine 326.

The protein belongs to the ferredoxin--NADP reductase type 2 family. In terms of assembly, homodimer. FAD serves as cofactor.

It catalyses the reaction 2 reduced [2Fe-2S]-[ferredoxin] + NADP(+) + H(+) = 2 oxidized [2Fe-2S]-[ferredoxin] + NADPH. The chain is Ferredoxin--NADP reductase from Staphylococcus saprophyticus subsp. saprophyticus (strain ATCC 15305 / DSM 20229 / NCIMB 8711 / NCTC 7292 / S-41).